The sequence spans 189 residues: SAGA-associated factor 11 homolog (189 aa).

The segment at 94–115 adopts an SGF11-type zinc-finger fold; sequence CTCPNCDRLVAATRFAPHLEKC. Residues 128-189 are disordered; the sequence is RRLATKEGSS…GSKKNNGKTF (62 aa). The segment covering 136-145 has biased composition (low complexity); that stretch reads SSASSTSTST. S165 carries the phosphoserine modification. Low complexity predominate over residues 175–189; sequence NSRNNGSKKNNGKTF.

This sequence belongs to the SGF11 family. As to quaternary structure, component of some SAGA transcription coactivator-HAT complexes, at least composed of Ada2b, not/nonstop, Pcaf/Gcn5, Sgf11 and Spt3. Within the SAGA complex, Sgf11, e(y)2, and not/nonstop form an additional subcomplex of SAGA called the DUB module (deubiquitination module). Interacts directly with not/nonstop. Interacts with the AMEX complex component xmas-2. Interacts with Cbp80; important for promoter recruitment of Sgf11 that is not associated with the DUB module.

Its subcellular location is the nucleus. It is found in the nucleoplasm. The protein resides in the cytoplasm. Its function is as follows. Component of the transcription regulatory histone acetylation (HAT) complex SAGA, a multiprotein complex that activates transcription by remodeling chromatin and mediating histone acetylation and deubiquitination. Within the SAGA complex, participates in a subcomplex that specifically deubiquitinates histone H2B. The SAGA complex is recruited to specific gene promoters by activators, where it is required for transcription. Required for nuclear receptor-mediated transactivation. Binds independently on SAGA to promoters in an RNA-dependent manner. Binds to mRNA and is essential for total mRNA export from the nucleus. Required to counteract heterochromatin silencing. Controls the development of neuronal connectivity in visual system by being required for accurate axon targeting in the optic lobe. Required for expression of ecdysone-induced genes such as br/broad. This chain is SAGA-associated factor 11 homolog, found in Drosophila virilis (Fruit fly).